The following is a 206-amino-acid chain: Ribosomal RNA small subunit methyltransferase G (206 aa).

S-adenosyl-L-methionine-binding positions include Gly74, Leu79, Val125 to Glu126, and Arg140.

This sequence belongs to the methyltransferase superfamily. RNA methyltransferase RsmG family.

The protein localises to the cytoplasm. It catalyses the reaction guanosine(527) in 16S rRNA + S-adenosyl-L-methionine = N(7)-methylguanosine(527) in 16S rRNA + S-adenosyl-L-homocysteine. In terms of biological role, specifically methylates the N7 position of guanine in position 527 of 16S rRNA. This is Ribosomal RNA small subunit methyltransferase G from Shewanella baltica (strain OS223).